The sequence spans 299 residues: GTPase Era (299 aa).

One can recognise an Era-type G domain in the interval 5–175 (RSGFVCLVGR…IDVLAAALPP (171 aa)). The tract at residues 13–20 (GRPNTGKS) is G1. A GTP-binding site is contributed by 13 to 20 (GRPNTGKS). Residues 39–43 (QTTRH) form a G2 region. The G3 stretch occupies residues 60–63 (DTPG). Residues 60 to 64 (DTPGL) and 124 to 127 (TKID) each bind GTP. Residues 124–127 (TKID) are G4. Positions 154-156 (VSA) are G5. The 80-residue stretch at 206-285 (VRDELPHSLA…YLDLRVKVAK (80 aa)) folds into the KH type-2 domain.

Belongs to the TRAFAC class TrmE-Era-EngA-EngB-Septin-like GTPase superfamily. Era GTPase family. In terms of assembly, monomer.

The protein localises to the cell envelope. It localises to the secreted. It is found in the cell wall. Functionally, exhibits GTPase activity. Binds RNA but is probably not involved in ribosome assembly in mycobacteria. The sequence is that of GTPase Era from Mycolicibacterium paratuberculosis (strain ATCC BAA-968 / K-10) (Mycobacterium paratuberculosis).